The following is a 199-amino-acid chain: FMN-dependent NADH:quinone oxidoreductase (199 aa).

FMN contacts are provided by residues serine 9 and methionine 95–phenylalanine 98.

It belongs to the azoreductase type 1 family. In terms of assembly, homodimer. It depends on FMN as a cofactor.

The catalysed reaction is 2 a quinone + NADH + H(+) = 2 a 1,4-benzosemiquinone + NAD(+). It carries out the reaction N,N-dimethyl-1,4-phenylenediamine + anthranilate + 2 NAD(+) = 2-(4-dimethylaminophenyl)diazenylbenzoate + 2 NADH + 2 H(+). In terms of biological role, quinone reductase that provides resistance to thiol-specific stress caused by electrophilic quinones. Functionally, also exhibits azoreductase activity. Catalyzes the reductive cleavage of the azo bond in aromatic azo compounds to the corresponding amines. The sequence is that of FMN-dependent NADH:quinone oxidoreductase from Dechloromonas aromatica (strain RCB).